Here is a 74-residue protein sequence, read N- to C-terminus: Somatostatin-2 (74 aa).

Residues 1-46 constitute a propeptide that is removed on maturation; sequence ARGAGLLSQDWSAVEDLLAQMSLPEADAQREAEVVSVATGGRLNLE. Cysteine 63 and cysteine 74 form a disulfide bridge.

This sequence belongs to the somatostatin family.

It is found in the secreted. Somatostatin inhibits the release of somatotropin. This is Somatostatin-2 (sst2) from Myoxocephalus scorpius (Shorthorn sculpin).